An 86-amino-acid polypeptide reads, in one-letter code: Co-chaperonin GroES (86 aa).

The protein belongs to the GroES chaperonin family. Heptamer of 7 subunits arranged in a ring. Interacts with the chaperonin GroEL.

It localises to the cytoplasm. Functionally, together with the chaperonin GroEL, plays an essential role in assisting protein folding. The GroEL-GroES system forms a nano-cage that allows encapsulation of the non-native substrate proteins and provides a physical environment optimized to promote and accelerate protein folding. GroES binds to the apical surface of the GroEL ring, thereby capping the opening of the GroEL channel. The protein is Co-chaperonin GroES of Campylobacter curvus (strain 525.92).